We begin with the raw amino-acid sequence, 138 residues long: Regulator of ribonuclease activity B (138 aa).

The tract at residues Tyr114 to His138 is disordered. The segment covering Pro118–His138 has biased composition (acidic residues).

This sequence belongs to the RraB family. Interacts with the C-terminal region of Rne.

It localises to the cytoplasm. Functionally, globally modulates RNA abundance by binding to RNase E (Rne) and regulating its endonucleolytic activity. Can modulate Rne action in a substrate-dependent manner by altering the composition of the degradosome. The sequence is that of Regulator of ribonuclease activity B from Escherichia coli (strain K12).